A 298-amino-acid polypeptide reads, in one-letter code: HTH-type transcriptional regulator ArgP (298 aa).

An HTH lysR-type domain is found at 4–60; the sequence is LDYKWIEALDAVVAQGGFERAAEELYISQSAVSQRIKQLERFLAQSVLIREQPPKPT. The segment at residues 21–40 is a DNA-binding region (H-T-H motif); the sequence is FERAAEELYISQSAVSQRIK.

Belongs to the LysR transcriptional regulatory family. In terms of assembly, homodimer.

Functionally, controls the transcription of genes involved in arginine and lysine metabolism. The protein is HTH-type transcriptional regulator ArgP of Vibrio vulnificus (strain YJ016).